The chain runs to 361 residues: UDP-N-acetylglucosamine--N-acetylmuramyl-(pentapeptide) pyrophosphoryl-undecaprenol N-acetylglucosamine transferase (361 aa).

UDP-N-acetyl-alpha-D-glucosamine contacts are provided by residues 13–15 (TGG), asparagine 125, arginine 167, serine 196, isoleucine 251, 270–275 (ALTVTE), and glutamine 296.

Belongs to the glycosyltransferase 28 family. MurG subfamily.

It localises to the cell inner membrane. It carries out the reaction di-trans,octa-cis-undecaprenyl diphospho-N-acetyl-alpha-D-muramoyl-L-alanyl-D-glutamyl-meso-2,6-diaminopimeloyl-D-alanyl-D-alanine + UDP-N-acetyl-alpha-D-glucosamine = di-trans,octa-cis-undecaprenyl diphospho-[N-acetyl-alpha-D-glucosaminyl-(1-&gt;4)]-N-acetyl-alpha-D-muramoyl-L-alanyl-D-glutamyl-meso-2,6-diaminopimeloyl-D-alanyl-D-alanine + UDP + H(+). The protein operates within cell wall biogenesis; peptidoglycan biosynthesis. Functionally, cell wall formation. Catalyzes the transfer of a GlcNAc subunit on undecaprenyl-pyrophosphoryl-MurNAc-pentapeptide (lipid intermediate I) to form undecaprenyl-pyrophosphoryl-MurNAc-(pentapeptide)GlcNAc (lipid intermediate II). This is UDP-N-acetylglucosamine--N-acetylmuramyl-(pentapeptide) pyrophosphoryl-undecaprenol N-acetylglucosamine transferase from Psychrobacter cryohalolentis (strain ATCC BAA-1226 / DSM 17306 / VKM B-2378 / K5).